A 293-amino-acid chain; its full sequence is Large ribosomal subunit protein uL18 (293 aa).

Residues 249–273 (DASPAAKKAAKPSKRHTAKRLTYDE) form a disordered region. The segment covering 256–267 (KAAKPSKRHTAK) has biased composition (basic residues).

The protein belongs to the universal ribosomal protein uL18 family. In terms of assembly, component of the large ribosomal subunit (LSU).

It localises to the cytoplasm. The protein localises to the nucleus. Its function is as follows. Component of the ribosome, a large ribonucleoprotein complex responsible for the synthesis of proteins in the cell. The small ribosomal subunit (SSU) binds messenger RNAs (mRNAs) and translates the encoded message by selecting cognate aminoacyl-transfer RNA (tRNA) molecules. The large subunit (LSU) contains the ribosomal catalytic site termed the peptidyl transferase center (PTC), which catalyzes the formation of peptide bonds, thereby polymerizing the amino acids delivered by tRNAs into a polypeptide chain. The nascent polypeptides leave the ribosome through a tunnel in the LSU and interact with protein factors that function in enzymatic processing, targeting, and the membrane insertion of nascent chains at the exit of the ribosomal tunnel. The chain is Large ribosomal subunit protein uL18 (rpl-5) from Caenorhabditis elegans.